Here is a 412-residue protein sequence, read N- to C-terminus: UDP-galactose transporter homolog 1 (412 aa).

The helical transmembrane segment at 3 to 23 threads the bilayer; the sequence is VLRLAVCISGVYAAFLLWAIA. Residues 31–51 are disordered; it reads FPSVHPHPHQQPHSPSDPPPG. The next 4 membrane-spanning stretches (helical) occupy residues 58–78, 139–159, 197–217, and 222–242; these read LFLN…YLSF, LLAL…IGFL, YIVV…AETS, and GGSD…IDGL. A glycan (N-linked (GlcNAc...) asparagine) is linked at asparagine 244. 4 consecutive transmembrane segments (helical) span residues 262–282, 325–345, 355–375, and 379–399; these read MMFT…VLPL, SALA…LFIF, TLVM…VVVF, and LTKG…VEAG.

It belongs to the nucleotide-sugar transporter family. SLC35B subfamily.

It localises to the endoplasmic reticulum membrane. In terms of biological role, may be involved in specific transport of UDP-Gal from the cytosol to the Golgi lumen. Involved in the maintenance of optimal conditions for the folding of secretory pathway proteins in the endoplasmic reticulum. The polypeptide is UDP-galactose transporter homolog 1 (HUT1-A) (Cryptococcus neoformans var. neoformans serotype D (strain JEC21 / ATCC MYA-565) (Filobasidiella neoformans)).